The primary structure comprises 49 residues: Large ribosomal subunit protein bL33 (49 aa).

The protein belongs to the bacterial ribosomal protein bL33 family.

This chain is Large ribosomal subunit protein bL33, found in Fervidobacterium nodosum (strain ATCC 35602 / DSM 5306 / Rt17-B1).